A 223-amino-acid chain; its full sequence is Probable transaldolase (223 aa).

The active-site Schiff-base intermediate with substrate is K91.

This sequence belongs to the transaldolase family. Type 3B subfamily.

Its subcellular location is the cytoplasm. It catalyses the reaction D-sedoheptulose 7-phosphate + D-glyceraldehyde 3-phosphate = D-erythrose 4-phosphate + beta-D-fructose 6-phosphate. It functions in the pathway carbohydrate degradation; pentose phosphate pathway; D-glyceraldehyde 3-phosphate and beta-D-fructose 6-phosphate from D-ribose 5-phosphate and D-xylulose 5-phosphate (non-oxidative stage): step 2/3. Transaldolase is important for the balance of metabolites in the pentose-phosphate pathway. This is Probable transaldolase from Prosthecochloris aestuarii (strain DSM 271 / SK 413).